The primary structure comprises 883 residues: Leucine--tRNA ligase (883 aa).

The 'HIGH' region signature appears at 43–53 (PYPSGRIHIGH). The short motif at 630–634 (KMSKS) is the 'KMSKS' region element. Residue Lys-633 coordinates ATP.

This sequence belongs to the class-I aminoacyl-tRNA synthetase family.

Its subcellular location is the cytoplasm. The catalysed reaction is tRNA(Leu) + L-leucine + ATP = L-leucyl-tRNA(Leu) + AMP + diphosphate. In Nitrobacter winogradskyi (strain ATCC 25391 / DSM 10237 / CIP 104748 / NCIMB 11846 / Nb-255), this protein is Leucine--tRNA ligase.